We begin with the raw amino-acid sequence, 494 residues long: 3-octaprenyl-4-hydroxybenzoate carboxy-lyase (494 aa).

Mn(2+) is bound at residue Asn-172. Residues 175 to 177 (IYR), 189 to 191 (RWL), and 194 to 195 (RG) each bind prenylated FMN. Glu-238 is a Mn(2+) binding site. The active-site Proton donor is the Asp-294.

The protein belongs to the UbiD family. In terms of assembly, homohexamer. Prenylated FMN is required as a cofactor. The cofactor is Mn(2+).

It localises to the cell membrane. The catalysed reaction is a 4-hydroxy-3-(all-trans-polyprenyl)benzoate + H(+) = a 2-(all-trans-polyprenyl)phenol + CO2. It functions in the pathway cofactor biosynthesis; ubiquinone biosynthesis. Catalyzes the decarboxylation of 3-octaprenyl-4-hydroxy benzoate to 2-octaprenylphenol, an intermediate step in ubiquinone biosynthesis. In Herminiimonas arsenicoxydans, this protein is 3-octaprenyl-4-hydroxybenzoate carboxy-lyase.